Here is a 335-residue protein sequence, read N- to C-terminus: Nucleoid-associated protein YejK (335 aa).

This sequence belongs to the YejK family.

The protein resides in the cytoplasm. It is found in the nucleoid. In Shigella boydii serotype 18 (strain CDC 3083-94 / BS512), this protein is Nucleoid-associated protein YejK.